The sequence spans 160 residues: Cytochrome b6-f complex subunit 4 (160 aa).

Helical transmembrane passes span 36 to 56 (LLYI…GLSV), 95 to 115 (LLGV…PFIE), and 131 to 151 (TVFL…ALPI).

The protein belongs to the cytochrome b family. PetD subfamily. As to quaternary structure, the 4 large subunits of the cytochrome b6-f complex are cytochrome b6, subunit IV (17 kDa polypeptide, petD), cytochrome f and the Rieske protein, while the 4 small subunits are petG, petL, petM and petN. The complex functions as a dimer.

It is found in the plastid. The protein resides in the chloroplast thylakoid membrane. Functionally, component of the cytochrome b6-f complex, which mediates electron transfer between photosystem II (PSII) and photosystem I (PSI), cyclic electron flow around PSI, and state transitions. This chain is Cytochrome b6-f complex subunit 4, found in Chlorella vulgaris (Green alga).